A 223-amino-acid polypeptide reads, in one-letter code: Small ribosomal subunit protein uS3 (223 aa).

Residues 39 to 108 (IRNFVKKNSY…NILINIVEVK (70 aa)) form the KH type-2 domain.

It belongs to the universal ribosomal protein uS3 family. In terms of assembly, part of the 30S ribosomal subunit. Forms a tight complex with proteins S10 and S14.

In terms of biological role, binds the lower part of the 30S subunit head. Binds mRNA in the 70S ribosome, positioning it for translation. The protein is Small ribosomal subunit protein uS3 of Clostridium botulinum (strain Kyoto / Type A2).